The following is a 716-amino-acid chain: Zinc finger protein on ecdysone puffs (716 aa).

Disordered stretches follow at residues 103 to 168 and 182 to 208; these read PSLL…GGIR and KNANQNKKKEPTPGEKKIESPTKESPY. Positions 188–203 are enriched in basic and acidic residues; the sequence is KKKEPTPGEKKIESPT. A Phosphoserine modification is found at Ser201. Residue Thr203 is modified to Phosphothreonine. Residue Ser206 is modified to Phosphoserine. The segment at 216-240 adopts a C2H2-type 1 zinc-finger fold; that stretch reads FYCHLCKKHMWDANSFENHIKGRTH. A C2H2-type 2; atypical zinc finger spans residues 288–310; that stretch reads DYCTMCDLNFHGHISTHRKSEGH. A C2H2-type 3 zinc finger spans residues 319–343; the sequence is PKCIECNKEFATRIDYDTHLLSAEH. Residues 350–359 are compositionally biased toward basic and acidic residues; sequence NNTKVGERKR. The segment at 350 to 447 is disordered; the sequence is NNTKVGERKR…EEEEVALPVD (98 aa). Positions 379–383 match the Nuclear localization signal motif; sequence KRKKK. Over residues 386–401 the composition is skewed to basic and acidic residues; the sequence is KKEGEAADGEAKKEGA. The span at 405–414 shows a compositional bias: acidic residues; the sequence is EGAEGDEAEG. The segment covering 415-431 has biased composition (basic and acidic residues); that stretch reads EEAKEGEEAADETKEGD. A compositionally biased stretch (acidic residues) spans 432 to 447; it reads ELNESQEEEEVALPVD. The C2H2-type 4 zinc finger occupies 489 to 513; the sequence is YECSVCSKFFDTEVTAEIHSRTATH. The segment at 534 to 716 is disordered; the sequence is RAAAALEENE…QRARGRYNRY (183 aa). Basic and acidic residues predominate over residues 541 to 551; that stretch reads ENERKKRKVEE. Residues 544–548 carry the Nuclear localization signal motif; the sequence is RKKRK. Residues 560-638 show a composition bias toward acidic residues; the sequence is AAEETTEGAE…GQEGEQEPEP (79 aa). Over residues 639 to 656 the composition is skewed to pro residues; it reads EPAPVQTPAPAEPAPPAK. Residues 657–704 are compositionally biased toward low complexity; the sequence is TPAKTPTKAAAPAAVASPAAAATSADASPSPAKKATPARAAAGAKATP. 3 positions are modified to phosphoserine: Ser673, Ser684, and Ser686. The residue at position 692 (Thr692) is a Phosphothreonine. Over residues 707-716 the composition is skewed to basic residues; sequence QRARGRYNRY.

The protein localises to the nucleus. The protein resides in the chromosome. Its function is as follows. May play a role in the process of early and late gene activation, or possibly in RNA processing, for a defined set of developmentally regulated loci. This chain is Zinc finger protein on ecdysone puffs (Pep), found in Drosophila melanogaster (Fruit fly).